The following is a 143-amino-acid chain: Nucleoside diphosphate kinase (143 aa).

ATP is bound by residues Lys11, Phe59, Arg87, Thr93, Arg104, and Asn114. His117 (pros-phosphohistidine intermediate) is an active-site residue.

The protein belongs to the NDK family. As to quaternary structure, homotetramer. It depends on Mg(2+) as a cofactor.

The protein resides in the cytoplasm. The enzyme catalyses a 2'-deoxyribonucleoside 5'-diphosphate + ATP = a 2'-deoxyribonucleoside 5'-triphosphate + ADP. It catalyses the reaction a ribonucleoside 5'-diphosphate + ATP = a ribonucleoside 5'-triphosphate + ADP. Functionally, major role in the synthesis of nucleoside triphosphates other than ATP. The ATP gamma phosphate is transferred to the NDP beta phosphate via a ping-pong mechanism, using a phosphorylated active-site intermediate. This is Nucleoside diphosphate kinase from Shewanella frigidimarina (strain NCIMB 400).